Here is a 511-residue protein sequence, read N- to C-terminus: 2,3-bisphosphoglycerate-independent phosphoglycerate mutase (511 aa).

Residue Asp-12 coordinates Mn(2+). Tyr-36 carries the post-translational modification Phosphotyrosine. Ser-62 contributes to the Mn(2+) binding site. The Phosphoserine intermediate role is filled by Ser-62. Substrate is bound by residues His-123, 153–154, Arg-185, Arg-191, 261–264, and Lys-336; these read RD and RPDR. Mn(2+) contacts are provided by Asp-403, His-407, Asp-444, His-445, and His-462.

This sequence belongs to the BPG-independent phosphoglycerate mutase family. In terms of assembly, monomer. The cofactor is Mn(2+).

It carries out the reaction (2R)-2-phosphoglycerate = (2R)-3-phosphoglycerate. It participates in carbohydrate degradation; glycolysis; pyruvate from D-glyceraldehyde 3-phosphate: step 3/5. In terms of biological role, catalyzes the interconversion of 2-phosphoglycerate and 3-phosphoglycerate. The sequence is that of 2,3-bisphosphoglycerate-independent phosphoglycerate mutase from Geobacillus thermodenitrificans (strain NG80-2).